A 50-amino-acid polypeptide reads, in one-letter code: Large ribosomal subunit protein bL32A (50 aa).

Over residues 1-19 the composition is skewed to basic residues; sequence MAVPKRRKSRSNTRHRRSQ. A disordered region spans residues 1 to 21; the sequence is MAVPKRRKSRSNTRHRRSQWK.

The protein belongs to the bacterial ribosomal protein bL32 family.

This Saccharopolyspora erythraea (strain ATCC 11635 / DSM 40517 / JCM 4748 / NBRC 13426 / NCIMB 8594 / NRRL 2338) protein is Large ribosomal subunit protein bL32A.